Here is a 465-residue protein sequence, read N- to C-terminus: Myosin-6 (465 aa).

The 35-residue stretch at 1 to 35 (ILERGDALLVVQWNIRAFTGVKKWPWMELYFEIEP) folds into the Myosin motor domain. Residues 36 to 465 (LLKSAEAEKE…YRRKLEEAQR (430 aa)) are a coiled coil. Residues Ser285 and Ser334 each carry the phosphoserine modification. Residue Tyr456 is modified to Phosphotyrosine.

Muscle myosin is a hexameric protein that consists of 2 heavy chain subunits (MHC), 2 alkali light chain subunits (MLC) and 2 regulatory light chain subunits (MLC-2).

The protein localises to the cytoplasm. It localises to the myofibril. Its function is as follows. Muscle contraction. This is Myosin-6 (MYH6) from Oryctolagus cuniculus (Rabbit).